We begin with the raw amino-acid sequence, 415 residues long: Amylovoran biosynthesis protein AmsJ (415 aa).

This sequence belongs to the polysaccharide pyruvyl transferase family.

It functions in the pathway glycan metabolism; exopolysaccharide biosynthesis. Its function is as follows. Involved in the biosynthesis of amylovoran which functions as a virulence factor. The protein is Amylovoran biosynthesis protein AmsJ (amsJ) of Erwinia amylovora (Fire blight bacteria).